Here is a 198-residue protein sequence, read N- to C-terminus: Putative pseudouridine methyltransferase (198 aa).

S-adenosyl-L-methionine contacts are provided by Leu-132 and Cys-186.

The protein belongs to the methyltransferase superfamily. TrmY family.

It is found in the cytoplasm. The protein is Putative pseudouridine methyltransferase of Vibrio vulnificus (strain CMCP6).